We begin with the raw amino-acid sequence, 314 residues long: Thymidylate synthase (314 aa).

DUMP-binding positions include R21 and 176-177 (RR). The active-site Nucleophile is C196. Residues 216 to 219 (RSAD), N227, and 257 to 259 (HLY) each bind dUMP. D219 serves as a coordination point for (6R)-5,10-methylene-5,6,7,8-tetrahydrofolate. A (6R)-5,10-methylene-5,6,7,8-tetrahydrofolate-binding site is contributed by S313.

The protein belongs to the thymidylate synthase family. Bacterial-type ThyA subfamily. In terms of assembly, homodimer.

The protein resides in the cytoplasm. The enzyme catalyses dUMP + (6R)-5,10-methylene-5,6,7,8-tetrahydrofolate = 7,8-dihydrofolate + dTMP. It participates in pyrimidine metabolism; dTTP biosynthesis. Its function is as follows. Catalyzes the reductive methylation of 2'-deoxyuridine-5'-monophosphate (dUMP) to 2'-deoxythymidine-5'-monophosphate (dTMP) while utilizing 5,10-methylenetetrahydrofolate (mTHF) as the methyl donor and reductant in the reaction, yielding dihydrofolate (DHF) as a by-product. This enzymatic reaction provides an intracellular de novo source of dTMP, an essential precursor for DNA biosynthesis. The chain is Thymidylate synthase from Listeria monocytogenes serotype 4a (strain HCC23).